The primary structure comprises 176 residues: Ribosome rescue factor SmrB (176 aa).

Residues 98–173 (LDLHGLTQKQ…GTAALLLLIE (76 aa)) enclose the Smr domain.

Belongs to the SmrB family. In terms of assembly, associates with collided ribosomes, but not with correctly translating polysomes.

Functionally, acts as a ribosome collision sensor. Detects stalled/collided disomes (pairs of ribosomes where the leading ribosome is stalled and a second ribosome has collided with it) and endonucleolytically cleaves mRNA at the 5' boundary of the stalled ribosome. Stalled/collided disomes form a new interface (primarily via the 30S subunits) that binds SmrB. Cleaved mRNA becomes available for tmRNA ligation, leading to ribosomal subunit dissociation and rescue of stalled ribosomes. The sequence is that of Ribosome rescue factor SmrB from Yersinia pseudotuberculosis serotype O:1b (strain IP 31758).